Consider the following 371-residue polypeptide: Glutamate 5-kinase (371 aa).

Lys10 contributes to the ATP binding site. 3 residues coordinate substrate: Ser50, Asp137, and Asn149. ATP is bound by residues 169–170 and 208–214; these read SD and TGGMFTK. The 79-residue stretch at 274–352 folds into the PUA domain; the sequence is EGRIYIDDGA…EEIRNILGED (79 aa).

This sequence belongs to the glutamate 5-kinase family.

Its subcellular location is the cytoplasm. The catalysed reaction is L-glutamate + ATP = L-glutamyl 5-phosphate + ADP. It participates in amino-acid biosynthesis; L-proline biosynthesis; L-glutamate 5-semialdehyde from L-glutamate: step 1/2. Its function is as follows. Catalyzes the transfer of a phosphate group to glutamate to form L-glutamate 5-phosphate. The protein is Glutamate 5-kinase of Dictyoglomus turgidum (strain DSM 6724 / Z-1310).